Reading from the N-terminus, the 276-residue chain is Type II pantothenate kinase (276 aa).

ATP is bound at residue 8–15 (DAGGTLTK). The active-site Proton acceptor is glutamate 76. Residues threonine 105, 127-131 (GGTIM), phenylalanine 143, and serine 230 each bind ATP.

Belongs to the type II pantothenate kinase family. In terms of assembly, homodimer.

It localises to the cytoplasm. It carries out the reaction (R)-pantothenate + ATP = (R)-4'-phosphopantothenate + ADP + H(+). It participates in cofactor biosynthesis; coenzyme A biosynthesis; CoA from (R)-pantothenate: step 1/5. Its function is as follows. Catalyzes the phosphorylation of pantothenate (Pan), the first step in CoA biosynthesis. This is Type II pantothenate kinase from Bacillus cereus (strain ZK / E33L).